The following is a 1039-amino-acid chain: Translation initiation factor IF-2 (1039 aa).

Disordered stretches follow at residues 39-347 and 400-452; these read TISE…KWQE and ARPP…PEKV. Over residues 103–125 the composition is skewed to polar residues; it reads RNTTSNAPEASVANNQIASSEAN. The span at 157-176 shows a compositional bias: low complexity; sequence PQKPAAPEAEPEAQSQAPAK. Basic and acidic residues-rich tracts occupy residues 178–197 and 226–243; these read AVEKPEKSAQPRPGKPERQP and PILKRDRPRREDERDQAK. Residues 408 to 423 show a composition bias toward low complexity; the sequence is ARSASAATAAPISSPT. Basic and acidic residues predominate over residues 432-451; sequence NNRDQNRRQETEVKRERPEK. In terms of domain architecture, tr-type G spans 533–706; the sequence is RRPPVVTIMG…LLVAEVGELS (174 aa). The tract at residues 542–549 is G1; sequence GHVDHGKT. Position 542-549 (542-549) interacts with GTP; it reads GHVDHGKT. Residues 567–571 form a G2 region; sequence GITQH. Residues 592 to 595 form a G3 region; the sequence is DTPG. Residues 592 to 596 and 646 to 649 contribute to the GTP site; these read DTPGH and NKID. Residues 646–649 form a G4 region; that stretch reads NKID. The interval 682-684 is G5; sequence SAI.

The protein belongs to the TRAFAC class translation factor GTPase superfamily. Classic translation factor GTPase family. IF-2 subfamily.

Its subcellular location is the cytoplasm. Functionally, one of the essential components for the initiation of protein synthesis. Protects formylmethionyl-tRNA from spontaneous hydrolysis and promotes its binding to the 30S ribosomal subunits. Also involved in the hydrolysis of GTP during the formation of the 70S ribosomal complex. The protein is Translation initiation factor IF-2 of Nostoc sp. (strain PCC 7120 / SAG 25.82 / UTEX 2576).